Consider the following 402-residue polypeptide: Sulfate adenylyltransferase (402 aa).

It belongs to the sulfate adenylyltransferase family.

It catalyses the reaction sulfate + ATP + H(+) = adenosine 5'-phosphosulfate + diphosphate. It functions in the pathway sulfur metabolism; hydrogen sulfide biosynthesis; sulfite from sulfate: step 1/3. This Thiobacillus denitrificans (strain ATCC 25259 / T1) protein is Sulfate adenylyltransferase.